Consider the following 400-residue polypeptide: Elongation factor Tu (400 aa).

The tr-type G domain maps to lysine 10–glutamate 209. The segment at glycine 19–threonine 26 is G1. Residue glycine 19 to threonine 26 coordinates GTP. Threonine 26 provides a ligand contact to Mg(2+). Residues glycine 60–serine 64 are G2. Residues aspartate 81 to glycine 84 form a G3 region. Residues aspartate 81–histidine 85 and asparagine 136–aspartate 139 each bind GTP. A G4 region spans residues asparagine 136–aspartate 139. The tract at residues serine 174 to lysine 176 is G5.

The protein belongs to the TRAFAC class translation factor GTPase superfamily. Classic translation factor GTPase family. EF-Tu/EF-1A subfamily. As to quaternary structure, monomer.

The protein localises to the cytoplasm. It carries out the reaction GTP + H2O = GDP + phosphate + H(+). In terms of biological role, GTP hydrolase that promotes the GTP-dependent binding of aminoacyl-tRNA to the A-site of ribosomes during protein biosynthesis. This is Elongation factor Tu from Herpetosiphon aurantiacus (Herpetosiphon giganteus).